The sequence spans 512 residues: ADP,ATP carrier protein 4 (512 aa).

The next 11 membrane-spanning stretches (helical) occupy residues Ile-34–Ile-54, Ile-71–Val-91, Ile-102–Phe-122, Phe-157–Trp-177, Phe-192–Glu-212, Phe-231–Ile-251, Leu-296–Lys-316, Ala-330–Leu-350, Phe-361–Val-381, Leu-390–Ile-410, and Ser-476–Thr-496.

This sequence belongs to the ADP/ATP translocase tlc family.

It is found in the cell membrane. Its function is as follows. Provides the rickettsial cell with host ATP in exchange for rickettsial ADP. This is an obligate exchange system. This energy acquiring activity is an important component of rickettsial parasitism. The polypeptide is ADP,ATP carrier protein 4 (tlcD) (Rickettsia prowazekii (strain Madrid E)).